We begin with the raw amino-acid sequence, 132 residues long: Large ribosomal subunit protein uL14 (132 aa).

It belongs to the universal ribosomal protein uL14 family. The L3/L14/L24e cluster may contact the 16S rRNA in 2 intersubunit bridges. Part of the 50S ribosomal subunit. Forms a cluster with proteins L3 and L24e.

Functionally, forms part of two intersubunit bridges in the 70S ribosome. Binds to 23S rRNA. In Haloarcula marismortui (strain ATCC 43049 / DSM 3752 / JCM 8966 / VKM B-1809) (Halobacterium marismortui), this protein is Large ribosomal subunit protein uL14.